The chain runs to 619 residues: 1-deoxy-D-xylulose-5-phosphate synthase (619 aa).

Thiamine diphosphate-binding positions include H80 and 121-123; that span reads GHS. A Mg(2+)-binding site is contributed by D152. Residues 153 to 154, N181, Y288, and E370 contribute to the thiamine diphosphate site; that span reads GA. A Mg(2+)-binding site is contributed by N181.

Belongs to the transketolase family. DXPS subfamily. In terms of assembly, homodimer. Mg(2+) serves as cofactor. It depends on thiamine diphosphate as a cofactor.

The enzyme catalyses D-glyceraldehyde 3-phosphate + pyruvate + H(+) = 1-deoxy-D-xylulose 5-phosphate + CO2. It participates in metabolic intermediate biosynthesis; 1-deoxy-D-xylulose 5-phosphate biosynthesis; 1-deoxy-D-xylulose 5-phosphate from D-glyceraldehyde 3-phosphate and pyruvate: step 1/1. In terms of biological role, catalyzes the acyloin condensation reaction between C atoms 2 and 3 of pyruvate and glyceraldehyde 3-phosphate to yield 1-deoxy-D-xylulose-5-phosphate (DXP). This Yersinia pestis (strain Pestoides F) protein is 1-deoxy-D-xylulose-5-phosphate synthase.